A 508-amino-acid polypeptide reads, in one-letter code: Ribonuclease Y (508 aa).

A helical transmembrane segment spans residues 1–21 (MMLWYIVAGAGGLLIGYLIAN). Residues 198–283 (TVSTVSLPSD…EMYEKAKQEV (86 aa)) form the KH domain. The HD domain maps to 324-417 (VLNHSIEVAL…VAAADALSAA (94 aa)).

It belongs to the RNase Y family.

It localises to the cell membrane. Functionally, endoribonuclease that initiates mRNA decay. The protein is Ribonuclease Y of Thermotoga maritima (strain ATCC 43589 / DSM 3109 / JCM 10099 / NBRC 100826 / MSB8).